Consider the following 122-residue polypeptide: Ribonuclease P protein component (122 aa).

This sequence belongs to the RnpA family. As to quaternary structure, consists of a catalytic RNA component (M1 or rnpB) and a protein subunit.

It catalyses the reaction Endonucleolytic cleavage of RNA, removing 5'-extranucleotides from tRNA precursor.. Functionally, RNaseP catalyzes the removal of the 5'-leader sequence from pre-tRNA to produce the mature 5'-terminus. It can also cleave other RNA substrates such as 4.5S RNA. The protein component plays an auxiliary but essential role in vivo by binding to the 5'-leader sequence and broadening the substrate specificity of the ribozyme. The protein is Ribonuclease P protein component of Roseiflexus sp. (strain RS-1).